The following is a 575-amino-acid chain: Delta-1-pyrroline-5-carboxylate dehydrogenase, mitochondrial (575 aa).

297-302 (GKIQSG) provides a ligand contact to NAD(+). Residue Glu-317 is the Proton acceptor of the active site. Cys-351 (nucleophile) is an active-site residue.

Belongs to the aldehyde dehydrogenase family.

Its subcellular location is the mitochondrion inner membrane. It catalyses the reaction L-glutamate 5-semialdehyde + NAD(+) + H2O = L-glutamate + NADH + 2 H(+). It functions in the pathway amino-acid degradation; L-proline degradation into L-glutamate; L-glutamate from L-proline: step 2/2. The polypeptide is Delta-1-pyrroline-5-carboxylate dehydrogenase, mitochondrial (PUT2) (Saccharomyces cerevisiae (strain ATCC 204508 / S288c) (Baker's yeast)).